Reading from the N-terminus, the 423-residue chain is UPF0229 protein Pput_0430 (423 aa).

Residues 81–108 (EFTAGEHIPRPQGGGGGGGRGKAGNSGE) form a disordered region. The segment covering 92-107 (QGGGGGGGRGKAGNSG) has biased composition (gly residues).

The protein belongs to the UPF0229 family.

The polypeptide is UPF0229 protein Pput_0430 (Pseudomonas putida (strain ATCC 700007 / DSM 6899 / JCM 31910 / BCRC 17059 / LMG 24140 / F1)).